The primary structure comprises 179 residues: Large ribosomal subunit protein uL5 (179 aa).

The protein belongs to the universal ribosomal protein uL5 family. Part of the 50S ribosomal subunit; part of the 5S rRNA/L5/L18/L25 subcomplex. Contacts the 5S rRNA and the P site tRNA. Forms a bridge to the 30S subunit in the 70S ribosome.

This is one of the proteins that bind and probably mediate the attachment of the 5S RNA into the large ribosomal subunit, where it forms part of the central protuberance. In the 70S ribosome it contacts protein S13 of the 30S subunit (bridge B1b), connecting the 2 subunits; this bridge is implicated in subunit movement. Contacts the P site tRNA; the 5S rRNA and some of its associated proteins might help stabilize positioning of ribosome-bound tRNAs. The protein is Large ribosomal subunit protein uL5 of Thioalkalivibrio sulfidiphilus (strain HL-EbGR7).